A 706-amino-acid chain; its full sequence is Fatty acid oxidation complex subunit alpha (706 aa).

The interval 1–188 (MEKTFNLTRR…KMGLVNDVVP (188 aa)) is enoyl-CoA hydratase. The tract at residues 308 to 706 (RKVKKAVILG…TMAQENAHFF (399 aa)) is 3-hydroxyacyl-CoA dehydrogenase.

This sequence in the N-terminal section; belongs to the enoyl-CoA hydratase/isomerase family. It in the central section; belongs to the 3-hydroxyacyl-CoA dehydrogenase family. As to quaternary structure, heterotetramer of two alpha chains (FadJ) and two beta chains (FadI).

The protein resides in the cytoplasm. The enzyme catalyses a (3S)-3-hydroxyacyl-CoA = a (2E)-enoyl-CoA + H2O. The catalysed reaction is a 4-saturated-(3S)-3-hydroxyacyl-CoA = a (3E)-enoyl-CoA + H2O. It carries out the reaction a (3S)-3-hydroxyacyl-CoA + NAD(+) = a 3-oxoacyl-CoA + NADH + H(+). It catalyses the reaction (3S)-3-hydroxybutanoyl-CoA = (3R)-3-hydroxybutanoyl-CoA. It participates in lipid metabolism; fatty acid beta-oxidation. In terms of biological role, catalyzes the formation of a hydroxyacyl-CoA by addition of water on enoyl-CoA. Also exhibits 3-hydroxyacyl-CoA epimerase and 3-hydroxyacyl-CoA dehydrogenase activities. The polypeptide is Fatty acid oxidation complex subunit alpha (Shewanella baltica (strain OS155 / ATCC BAA-1091)).